The following is a 253-amino-acid chain: Large ribosomal subunit protein uL4 (253 aa).

Positions 78–107 are disordered; it reads SRAARVPHAKGGRRAHPPKPEADRSEKVNT. Residues 82-94 are compositionally biased toward basic residues; it reads RVPHAKGGRRAHP. Residues 95-107 are compositionally biased toward basic and acidic residues; the sequence is PKPEADRSEKVNT.

This sequence belongs to the universal ribosomal protein uL4 family. As to quaternary structure, part of the 50S ribosomal subunit.

Its function is as follows. One of the primary rRNA binding proteins, this protein initially binds near the 5'-end of the 23S rRNA. It is important during the early stages of 50S assembly. It makes multiple contacts with different domains of the 23S rRNA in the assembled 50S subunit and ribosome. Functionally, forms part of the polypeptide exit tunnel. This chain is Large ribosomal subunit protein uL4, found in Methanosarcina acetivorans (strain ATCC 35395 / DSM 2834 / JCM 12185 / C2A).